A 265-amino-acid chain; its full sequence is Hydroxyethylthiazole kinase (265 aa).

Methionine 50 lines the substrate pocket. ATP contacts are provided by arginine 125 and threonine 171. Glycine 198 is a binding site for substrate.

It belongs to the Thz kinase family. Requires Mg(2+) as cofactor.

The enzyme catalyses 5-(2-hydroxyethyl)-4-methylthiazole + ATP = 4-methyl-5-(2-phosphooxyethyl)-thiazole + ADP + H(+). It functions in the pathway cofactor biosynthesis; thiamine diphosphate biosynthesis; 4-methyl-5-(2-phosphoethyl)-thiazole from 5-(2-hydroxyethyl)-4-methylthiazole: step 1/1. Its function is as follows. Catalyzes the phosphorylation of the hydroxyl group of 4-methyl-5-beta-hydroxyethylthiazole (THZ). This Salmonella choleraesuis (strain SC-B67) protein is Hydroxyethylthiazole kinase.